We begin with the raw amino-acid sequence, 572 residues long: Urease subunit alpha (572 aa).

Residues 134–572 (GGIDSHIHFI…LPLAQRYFLF (439 aa)) form the Urease domain. The Ni(2+) site is built by His139, His141, and Lys222. Residue Lys222 is modified to N6-carboxylysine. His224 contributes to the substrate binding site. Ni(2+) is bound by residues His251 and His277. Residue His325 is the Proton donor of the active site. Asp365 contributes to the Ni(2+) binding site.

Belongs to the metallo-dependent hydrolases superfamily. Urease alpha subunit family. As to quaternary structure, heterotrimer of UreA (gamma), UreB (beta) and UreC (alpha) subunits. Three heterotrimers associate to form the active enzyme. Ni cation is required as a cofactor. In terms of processing, carboxylation allows a single lysine to coordinate two nickel ions.

It is found in the cytoplasm. The catalysed reaction is urea + 2 H2O + H(+) = hydrogencarbonate + 2 NH4(+). Its pathway is nitrogen metabolism; urea degradation; CO(2) and NH(3) from urea (urease route): step 1/1. This Paracidovorax citrulli (strain AAC00-1) (Acidovorax citrulli) protein is Urease subunit alpha.